Consider the following 520-residue polypeptide: Anthranilate synthase component 1 (520 aa).

L-tryptophan-binding positions include Ser-40 and 291–293 (PYM). Position 328-329 (328-329 (GT)) interacts with chorismate. Glu-361 serves as a coordination point for Mg(2+). Residues Tyr-449, Arg-469, 483–485 (GAG), and Gly-485 each bind chorismate. Glu-498 lines the Mg(2+) pocket.

This sequence belongs to the anthranilate synthase component I family. Heterotetramer consisting of two non-identical subunits: a beta subunit (TrpG) and a large alpha subunit (TrpE). Mg(2+) is required as a cofactor.

The enzyme catalyses chorismate + L-glutamine = anthranilate + pyruvate + L-glutamate + H(+). Its pathway is amino-acid biosynthesis; L-tryptophan biosynthesis; L-tryptophan from chorismate: step 1/5. Feedback inhibited by tryptophan. Functionally, part of a heterotetrameric complex that catalyzes the two-step biosynthesis of anthranilate, an intermediate in the biosynthesis of L-tryptophan. In the first step, the glutamine-binding beta subunit (TrpG) of anthranilate synthase (AS) provides the glutamine amidotransferase activity which generates ammonia as a substrate that, along with chorismate, is used in the second step, catalyzed by the large alpha subunit of AS (TrpE) to produce anthranilate. In the absence of TrpG, TrpE can synthesize anthranilate directly from chorismate and high concentrations of ammonia. The sequence is that of Anthranilate synthase component 1 (trpE) from Buchnera aphidicola subsp. Pemphigus spyrothecae.